A 148-amino-acid chain; its full sequence is Small ribosomal subunit protein eS19G (148 aa).

Belongs to the eukaryotic ribosomal protein eS19 family.

Elimination of the ALEP-1 gene from all somatic cells in its fully activate state may represent an alternative way to gene regulation. The polypeptide is Small ribosomal subunit protein eS19G (RPS19G) (Ascaris suum (Pig roundworm)).